The chain runs to 190 residues: Potassium-transporting ATPase KdpC subunit (190 aa).

The helical transmembrane segment at 13 to 33 (VGFLLLTLMCGVVYPGIVTIF) threads the bilayer.

The protein belongs to the KdpC family. The system is composed of three essential subunits: KdpA, KdpB and KdpC.

The protein localises to the cell membrane. Functionally, part of the high-affinity ATP-driven potassium transport (or Kdp) system, which catalyzes the hydrolysis of ATP coupled with the electrogenic transport of potassium into the cytoplasm. This subunit acts as a catalytic chaperone that increases the ATP-binding affinity of the ATP-hydrolyzing subunit KdpB by the formation of a transient KdpB/KdpC/ATP ternary complex. In Listeria monocytogenes serotype 4a (strain HCC23), this protein is Potassium-transporting ATPase KdpC subunit.